The chain runs to 196 residues: Large ribosomal subunit protein bL9 (196 aa).

Residues 174–196 (QAAADLLEGGAGQQASEYTEAQA) form a disordered region. The segment covering 186-196 (QQASEYTEAQA) has biased composition (polar residues).

It belongs to the bacterial ribosomal protein bL9 family.

Binds to the 23S rRNA. In Phenylobacterium zucineum (strain HLK1), this protein is Large ribosomal subunit protein bL9.